The chain runs to 411 residues: Replication factor C subunit 2 (411 aa).

Residues 1 to 36 (MADFFNLKARQQAAAQASSSKTPTSKQESNRLQPWV) form a disordered region. Positions 11-27 (QQAAAQASSSKTPTSKQ) are enriched in low complexity. Residues Val-36, Arg-40, 73–81 (GPPGTGKTS), Asn-195, and Arg-253 contribute to the ATP site.

The protein belongs to the activator 1 small subunits family. As to quaternary structure, heteropentamer of subunits RFC1, RFC2, RFC3, RFC4 and RFC5 that forms a complex with PCNA in the presence of ATP.

The protein localises to the nucleus. Its function is as follows. The elongation of primed DNA templates by DNA polymerase delta and epsilon requires the action of the accessory proteins proliferating cell nuclear antigen (PCNA) and activator 1. Subunit 2 binds ATP and single-stranded DNA. The polypeptide is Replication factor C subunit 2 (RFC2) (Phaeosphaeria nodorum (strain SN15 / ATCC MYA-4574 / FGSC 10173) (Glume blotch fungus)).